Reading from the N-terminus, the 33-residue chain is Photosystem II reaction center protein Psb30 (33 aa).

A helical transmembrane segment spans residues 5 to 25 (LALTLVSLVLVVSAGPLVVVL).

It belongs to the Psb30/Ycf12 family. As to quaternary structure, PSII is composed of 1 copy each of membrane proteins PsbA, PsbB, PsbC, PsbD, PsbE, PsbF, PsbH, PsbI, PsbJ, PsbK, PsbL, PsbM, PsbT, PsbX, PsbY, PsbZ, Psb30/Ycf12, peripheral proteins of the oxygen-evolving complex and a large number of cofactors. It forms dimeric complexes.

Its subcellular location is the plastid. It localises to the chloroplast thylakoid membrane. In terms of biological role, a core subunit of photosystem II (PSII), required for optimal photosynthesis, probably helps stabilize the reaction center. This Chlamydomonas reinhardtii (Chlamydomonas smithii) protein is Photosystem II reaction center protein Psb30.